The following is a 686-amino-acid chain: Antigen peptide transporter 2 (686 aa).

The Lumenal portion of the chain corresponds to 1-6 (MRLPDL). The chain crosses the membrane as a helical span at residues 7–27 (RPWTSLLLVDAALLWLLQGPL). At 28–56 (GTLLPQGLPGLWLEGTLRLGGLWGLLKLR) the chain is on the cytoplasmic side. Residues 57 to 77 (GLLGFVGTLLLPLCLATPLTV) form a helical membrane-spanning segment. The Lumenal segment spans residues 78-98 (SLRALVAGASRAPPARVASAP). Residues 99 to 119 (WSWLLVGYGAAGLSWSLWAVL) traverse the membrane as a helical segment. At 120–148 (SPPGAQEKEQDQVNNKVLMWRLLKLSRPD) the chain is on the cytoplasmic side. The chain crosses the membrane as a helical span at residues 149–169 (LPLLVAAFFFLVLAVLGETLI). The 284-residue stretch at 152-435 (LVAAFFFLVL…LVYIYGDMLS (284 aa)) folds into the ABC transmembrane type-1 domain. Over 170–187 (PHYSGRVIDILGGDFDPH) the chain is Lumenal. The helical transmembrane segment at 188–208 (AFASAIFFMCLFSFGSSLSAG) threads the bilayer. At 209–266 (CRGGCFTYTMSRINLRIREQLFSSLLRQDLGFFQETKTGELNSRLSSDTTLMSNWLPL) the chain is on the cytoplasmic side. Residues 267 to 287 (NANVLLRSLVKVVGLYGFMLS) form a helical membrane-spanning segment. Residues 288–293 (ISPRLT) are Lumenal-facing. Residues 294-314 (LLSLLHMPFTIAAEKVYNTRH) form a helical membrane-spanning segment. The tract at residues 301–389 (PFTIAAEKVY…RRVLHLGVQM (89 aa)) is part of the peptide-binding site. Residues 315–374 (QEVLREIQDAVARAGQVVREAVGGLQTVRSFGAEEHEVCRYKEALEQCRQLYWRRDLERA) lie on the Cytoplasmic side of the membrane. Residues 375-395 (LYLLVRRVLHLGVQMLMLSCG) traverse the membrane as a helical segment. Residues 396-408 (LQQMQDGELTQGS) are Lumenal-facing. Residues 409-429 (LLSFMIYQESVGSYVQTLVYI) traverse the membrane as a helical segment. The segment at 414 to 433 (IYQESVGSYVQTLVYIYGDM) is part of the peptide-binding site. The Cytoplasmic portion of the chain corresponds to 430-686 (YGDMLSNVGA…EGKLQKLAQL (257 aa)). The region spanning 468–686 (VKFQDVSFAY…EGKLQKLAQL (219 aa)) is the ABC transporter domain. 503–510 (GPNGSGKS) is an ATP binding site.

Belongs to the ABC transporter superfamily. ABCB family. MHC peptide exporter (TC 3.A.1.209) subfamily. Heterodimer of TAP1 and TAP2 (TAP1-TAP2). A component of the peptide loading complex (PLC), interacts via TAPBP with MHCI heterodimer; this interaction mediates peptide-MHCI assembly. Recruits TAPBP in a 1:1 stoichiometry. Interacts with classical MHCI such as HLA-A*02-B2M; this interaction is obligatory for the loading of peptide epitopes. Interacts with non-classical MHCI molecules including HLA-E-B2M and HLA-F-B2M as well as PLC component CALR before the peptide loading. In terms of assembly, (Microbial infection) Interacts with Epstein-Barr virus BLNF2a. As to quaternary structure, (Microbial infection) Interacts with herpes simplex virus US12/ICP47. (Microbial infection) Interacts with adenovirus E3-19K glycoprotein, which binds TAP1-TAP2 and acts as a TAPBP inhibitor, preventing TAP1-TAP2 association with MHCI. The cofactor is Mg(2+).

The protein resides in the endoplasmic reticulum membrane. It carries out the reaction a peptide antigen(in) + ATP + H2O = a peptide antigen(out) + ADP + phosphate + H(+). Inhibited at high ER lumenal peptide concentrations. With respect to regulation, (Microbial infection) Inhibited by herpes simplex virus US12/ICP47 protein, which blocks the peptide-binding site of TAP1-TAP2. Its activity is regulated as follows. (Microbial infection) Inhibited by human cytomegalovirus US6 glycoprotein, which binds to the lumenal side of TAP1-TAP2 complex and inhibits peptide translocation by specifically blocking ATP-binding and preventing TAP1-TAP2 conformational rearrangement induced by peptide binding. Its function is as follows. ABC transporter associated with antigen processing. In complex with TAP1 mediates unidirectional translocation of peptide antigens from cytosol to endoplasmic reticulum (ER) for loading onto MHC class I (MHCI) molecules. Uses the chemical energy of ATP to export peptides against the concentration gradient. During the transport cycle alternates between 'inward-facing' state with peptide binding site facing the cytosol to 'outward-facing' state with peptide binding site facing the ER lumen. Peptide antigen binding to ATP-loaded TAP1-TAP2 induces a switch to hydrolysis-competent 'outward-facing' conformation ready for peptide loading onto nascent MHCI molecules. Subsequently ATP hydrolysis resets the transporter to the 'inward facing' state for a new cycle. Typically transports intracellular peptide antigens of 8 to 13 amino acids that arise from cytosolic proteolysis via IFNG-induced immunoproteasome. Binds peptides with free N- and C-termini, the first three and the C-terminal residues being critical. Preferentially selects peptides having a highly hydrophobic residue at position 3 and hydrophobic or charged residues at the C-terminal anchor. Proline at position 2 has the most destabilizing effect. As a component of the peptide loading complex (PLC), acts as a molecular scaffold essential for peptide-MHCI assembly and antigen presentation. This is Antigen peptide transporter 2 from Homo sapiens (Human).